A 210-amino-acid chain; its full sequence is Redox-sensing transcriptional repressor Rex (210 aa).

Positions 16 to 55 form a DNA-binding region, H-T-H motif; the sequence is IYSRFLKRLDKKGITTVSSGDIAEGVGVSPAQVRKDLAYF. 90–95 lines the NAD(+) pocket; it reads GAGNLG.

This sequence belongs to the transcriptional regulatory Rex family. In terms of assembly, homodimer.

The protein localises to the cytoplasm. Its function is as follows. Modulates transcription in response to changes in cellular NADH/NAD(+) redox state. This is Redox-sensing transcriptional repressor Rex from Desulforamulus reducens (strain ATCC BAA-1160 / DSM 100696 / MI-1) (Desulfotomaculum reducens).